Reading from the N-terminus, the 452-residue chain is MTRWLFMVACLGIACQGAIVRENSPRNLEKSLNVIHEWKYFDYDFGSEERRQAAIQSGEYDHTKNYPFDVDQWRDKTFVTILRYDGVPSTLNVISGKTGKGGRLLKPYPDWSFAEFKDCSKIVSAFKIAIDKFDRLWVLDSGLVNRTVPVCAPKLHVFDLKTSNHLKQIEIPHDIAVNATTGKGGLVSLAVQAIDLANTLVYMADHKGDALIVYQNADDSFHRLTSNTFDYDPRYAKMTIDGESFTLKNGICGMALSPVTNNLYYSPLASHGLYYVNTAPFMKSQFGENNVQYQGSEDILNTQSLAKAVSKNGVLFVGLVGNSAVGCWNEHQSLQRQNLEMVAQNDRTLQMIAGMKIKEELPHFVGSNKPVKDEYMLVLSNRMQKIVNDDFNFDDVNFRILGANVKELIRNTHCVNNNQNDNIQNTNNQNDNNQKNNKKNANNQKNNNQNDN.

Residues 1 to 17 (MTRWLFMVACLGIACQG) form the signal peptide. 2 N-linked (GlcNAc...) asparagine glycosylation sites follow: Asn145 and Asn178. Residues 416–452 (NNNQNDNIQNTNNQNDNNQKNNKKNANNQKNNNQNDN) form a disordered region.

In terms of processing, N-linked core structure contains mannose (which consists of 8-alpha-mannosyl residues, one beta-mannosyl residue, and chitobiose). Secreted from the hypopharyngeal glands of the worker honey bee (at protein level); expression peaks at 12 days post eclosion. Expressed in the brains of adult worker bees peaking at 12 days post eclosion (at protein level). Expressed in the spermatheca of adult queen bees (at protein level); Expression levels are higher in mated queens than in virgin queens.

Its subcellular location is the secreted. Functionally, highly abundant protein component of royal jelly, a substance produced in the hypopharyngeal gland containing proteins, free amino acids, fatty acids, sugars and other nutrients, which is fed to developing larvae by worker nurse bees. Major royal jelly proteins (MRJPs) are high in essential amino acids and probably have a nutritional function in larval food. All larvae are fed some royal jelly (also known as worker jelly) early in their development but it forms the principal source of nutrition for larvae destined to become queen bees. Produced in the spermatheca of adult queen bees, along with other major royal jelly proteins, where it may act as a nutrient supply for sperm stored by mated queens, or be involved in energy metabolism. In Apis mellifera (Honeybee), this protein is Major royal jelly protein 2.